A 361-amino-acid polypeptide reads, in one-letter code: Glutamate 5-kinase (361 aa).

Lys14 is an ATP binding site. 3 residues coordinate substrate: Ser54, Asp141, and Asn153. A PUA domain is found at 277 to 355 (KGAVIINQGA…KGLKPVIHYD (79 aa)).

This sequence belongs to the glutamate 5-kinase family.

The protein localises to the cytoplasm. It catalyses the reaction L-glutamate + ATP = L-glutamyl 5-phosphate + ADP. It functions in the pathway amino-acid biosynthesis; L-proline biosynthesis; L-glutamate 5-semialdehyde from L-glutamate: step 1/2. Functionally, catalyzes the transfer of a phosphate group to glutamate to form L-glutamate 5-phosphate. The chain is Glutamate 5-kinase from Chlorobaculum tepidum (strain ATCC 49652 / DSM 12025 / NBRC 103806 / TLS) (Chlorobium tepidum).